The following is a 481-amino-acid chain: Cysteine--tRNA ligase (481 aa).

C29 serves as a coordination point for Zn(2+). The short motif at 31–41 (PTVYDYSHLGH) is the 'HIGH' region element. Zn(2+) is bound by residues C210, H235, and E239. The short motif at 272–276 (KMSKS) is the 'KMSKS' region element. K275 serves as a coordination point for ATP.

It belongs to the class-I aminoacyl-tRNA synthetase family. As to quaternary structure, monomer. Requires Zn(2+) as cofactor.

It is found in the cytoplasm. It catalyses the reaction tRNA(Cys) + L-cysteine + ATP = L-cysteinyl-tRNA(Cys) + AMP + diphosphate. This chain is Cysteine--tRNA ligase, found in Anaeromyxobacter dehalogenans (strain 2CP-C).